Reading from the N-terminus, the 786-residue chain is Endonuclease MutS2 (786 aa).

An ATP-binding site is contributed by 332-339; sequence GPNTGGKT. The Smr domain maps to 711–786; sequence IDLRGMDSME…GTGVTVVELK (76 aa).

The protein belongs to the DNA mismatch repair MutS family. MutS2 subfamily. In terms of assembly, homodimer. Binds to stalled ribosomes, contacting rRNA.

Its function is as follows. Endonuclease that is involved in the suppression of homologous recombination and thus may have a key role in the control of bacterial genetic diversity. Acts as a ribosome collision sensor, splitting the ribosome into its 2 subunits. Detects stalled/collided 70S ribosomes which it binds and splits by an ATP-hydrolysis driven conformational change. Acts upstream of the ribosome quality control system (RQC), a ribosome-associated complex that mediates the extraction of incompletely synthesized nascent chains from stalled ribosomes and their subsequent degradation. Probably generates substrates for RQC. The protein is Endonuclease MutS2 of Clostridium tetani (strain Massachusetts / E88).